The primary structure comprises 492 residues: GTPase Der (492 aa).

2 EngA-type G domains span residues 3-167 and 201-381; these read FTLA…DAYA and LQVA…EVWN. Residues 9 to 16, 56 to 60, 119 to 122, 207 to 214, 259 to 263, and 324 to 327 contribute to the GTP site; these read GRPNVGKS, DTAGL, NKAE, GRPNAGKS, DTAGM, and NKWD. A KH-like domain is found at 382–468; it reads RRVTTAQLNR…RLWMRGQNDA (87 aa). The tract at residues 462-492 is disordered; it reads MRGQNDANPYKGRKKAPPSKLRKHTDGRRKD. The segment covering 472 to 492 has biased composition (basic residues); sequence KGRKKAPPSKLRKHTDGRRKD.

This sequence belongs to the TRAFAC class TrmE-Era-EngA-EngB-Septin-like GTPase superfamily. EngA (Der) GTPase family. Associates with the 50S ribosomal subunit.

In terms of biological role, GTPase that plays an essential role in the late steps of ribosome biogenesis. The sequence is that of GTPase Der from Roseobacter denitrificans (strain ATCC 33942 / OCh 114) (Erythrobacter sp. (strain OCh 114)).